A 345-amino-acid polypeptide reads, in one-letter code: Delta(1)-pyrroline-2-carboxylate reductase (345 aa).

The Charge relay system role is filled by serine 47. Histidine 48 acts as the Proton donor in catalysis. Residue arginine 52 participates in substrate binding. 121-125 provides a ligand contact to NADP(+); it reads HFSAL. Threonine 161 contributes to the substrate binding site. Residue 179-181 participates in NADP(+) binding; that stretch reads DFA. Residue 187–188 coordinates substrate; it reads RG. Glutamate 189 functions as the Charge relay system in the catalytic mechanism. NADP(+) contacts are provided by residues 230–231 and 305–311; these read HK and RLPSGRR.

It belongs to the LDH2/MDH2 oxidoreductase family. As to quaternary structure, homodimer.

It catalyses the reaction L-proline + NAD(+) = 1-pyrroline-2-carboxylate + NADH + H(+). The catalysed reaction is L-proline + NADP(+) = 1-pyrroline-2-carboxylate + NADPH + H(+). Functionally, catalyzes the reduction of Delta(1)-pyrroline-2-carboxylate (Pyr2C) to L-proline, using NADPH as the electron donor. Is likely involved in a degradation pathway that converts trans-3-hydroxy-L-proline (t3LHyp) to L-proline, which would allow A.tumefaciens to grow on t3LHyp as a sole carbon source. This Agrobacterium fabrum (strain C58 / ATCC 33970) (Agrobacterium tumefaciens (strain C58)) protein is Delta(1)-pyrroline-2-carboxylate reductase.